A 930-amino-acid chain; its full sequence is Progesterone receptor (930 aa).

A compositionally biased stretch (basic and acidic residues) spans 1–11; it reads MTELKAKEPRA. 2 disordered regions span residues 1–133 and 148–260; these read MTEL…ASPA and LPED…SGAA. The segment at 1-165 is AF3; mediates transcriptional activation; the sequence is MTELKAKEPR…PATKGVLAPL (165 aa). The segment at 1–565 is modulating, Pro-Rich; that stretch reads MTELKAKEPR…PQYSFESLPQ (565 aa). Residue Lys7 forms a Glycyl lysine isopeptide (Lys-Gly) (interchain with G-Cter in SUMO) linkage. A Phosphoserine modification is found at Ser20. The span at 38-49 shows a compositional bias: polar residues; it reads QGSQTSEASSVV. Positions 56–60 match the LXXL motif 1 motif; that stretch reads LDGLL. Ser82 carries the phosphoserine modification. The short motif at 116–120 is the LXXL motif 2 element; it reads LDTLL. The residue at position 131 (Ser131) is a Phosphoserine. A mediates transcriptional transrepression region spans residues 166–304; the sequence is MSRPEDKAGD…LATSVVDFIH (139 aa). Residues 184–188 carry the Nuclear localization signal motif; sequence KVLPR. A compositionally biased stretch (low complexity) spans 187-204; it reads PRGLSPSRQLLLPSSGSP. Phosphoserine occurs at positions 191 and 212. Position 293 is a phosphoserine; by MAPK1 (Ser293). Residues 334-356 form a disordered region; the sequence is AASPFVPQRGSPSASSTPVAGGD. Ser344 carries the phosphoserine; by MAPK modification. Lys387 is covalently cross-linked (Glycyl lysine isopeptide (Lys-Gly) (interchain with G-Cter in SUMO); alternate). Lys387 is covalently cross-linked (Glycyl lysine isopeptide (Lys-Gly) (interchain with G-Cter in ubiquitin); alternate). At Ser399 the chain carries Phosphoserine; by CDK2. The tract at residues 415–454 is disordered; sequence DFQLAAPPPPSLPPRVPSSRPGEAAVAASPGSASVSSSSS. Positions 420-430 are enriched in pro residues; it reads APPPPSLPPRV. Over residues 431 to 454 the composition is skewed to low complexity; that stretch reads PSSRPGEAAVAASPGSASVSSSSS. Residues 457–547 form an AF1; mediates transcriptional activation region; sequence STLECILYKA…VYTPYLNYLR (91 aa). A Glycyl lysine isopeptide (Lys-Gly) (interchain with G-Cter in SUMO) cross-link involves residue Lys532. A DNA-binding region (nuclear receptor) is located at residues 566 to 640; the sequence is KICLICGDEA…AGMVLGGRKF (75 aa). NR C4-type zinc fingers lie at residues 568–588 and 604–628; these read CLIC…CGSC and CAGR…LRKC. Position 673 is a phosphoserine (Ser673). One can recognise an NR LBD domain in the interval 676–910; it reads QEIQLIPPLI…EFPEMMSEVI (235 aa). The interval 684–930 is AF2; mediates transcriptional activation; that stretch reads LINLLMSIEP…MVKPLLFHKK (247 aa). Residue Arg763 coordinates progesterone.

This sequence belongs to the nuclear hormone receptor family. NR3 subfamily. As to quaternary structure, interacts with SMARD1 and UNC45A. Interacts with CUEDC2; the interaction promotes ubiquitination, decreases sumoylation, and represses transcriptional activity. Interacts with PIAS3; the interaction promotes sumoylation of PR in a hormone-dependent manner, inhibits DNA-binding, and alters nuclear export. Interacts with SP1; the interaction requires ligand-induced phosphorylation on Ser-344 by ERK1/2-MAPK. Interacts with PRMT2. Interacts with NCOA2 and NCOA1. Interacts with KLF9. Interacts with GTF2B. In terms of processing, phosphorylated on multiple serine sites. Several of these sites are hormone-dependent. Phosphorylation on Ser-293 is highly hormone-dependent and modulates ubiquitination and sumoylation on Lys-387. Phosphorylation on Ser-102 and Ser-344 also requires induction by hormone. Basal phosphorylation on Ser-82, Ser-191 and Ser-399 is increased in response to progesterone and can be phosphorylated in vitro by the CDK2-A1 complex. Increased levels of phosphorylation on Ser-399 also in the presence of EGF, heregulin, IGF, PMA and FBS. Phosphorylation at this site by CDK2 is ligand-independent, and increases nuclear translocation and transcriptional activity. Phosphorylation at Ser-293, but not at Ser-191, is impaired during the G(2)/M phase of the cell cycle. Phosphorylation on Ser-344 by ERK1/2 MAPK is required for interaction with SP1. Post-translationally, sumoylation is hormone-dependent and represses transcriptional activity. Sumoylation on all three sites is enhanced by PIAS3. Desumoylated by SENP1. Sumoylation on Lys-387, the main site of sumoylation, is repressed by ubiquitination on the same site, and modulated by phosphorylation at Ser-293. Ubiquitination is hormone-dependent and represses sumoylation on the same site. Promoted by MAPK-mediated phosphorylation on Ser-293. Ubiquitinated by UBR5, leading to its degradation: UBR5 specifically recognizes and binds ligand-bound PGR when it is not associated with coactivators (NCOAs). In presence of NCOAs, the UBR5-degron is not accessible, preventing its ubiquitination and degradation. In terms of processing, palmitoylated by ZDHHC7 and ZDHHC21. Palmitoylation is required for plasma membrane targeting and for rapid intracellular signaling via ERK and AKT kinases and cAMP generation.

The protein resides in the nucleus. The protein localises to the cytoplasm. Its function is as follows. The steroid hormones and their receptors are involved in the regulation of eukaryotic gene expression and affect cellular proliferation and differentiation in target tissues. Transcriptional activator of several progesteron-dependent promoters in a variety of cell types. Involved in activation of SRC-dependent MAPK signaling on hormone stimulation. This chain is Progesterone receptor (PGR), found in Oryctolagus cuniculus (Rabbit).